We begin with the raw amino-acid sequence, 508 residues long: MYNVFQMAVWLPAQNKFYLPPQPITRILSTDEYVTRTNLFYHATSERLLLVGHPLFEISSNQTVTIPKVSPNAFRVFRVRFADPNRFAFGDKAIFNPETERLVWGLRGIEIGRGQPLGIGITGHPLLNKLDDAENPTNYINTHANGDSRQNTAFDAKQTQMFLVGCTPASGEHWTSSRCPGEQVKLGDCPRVQMIESVIEDGDMMDIGFGAMDFAALQQDKSDVPLDVVQATCKYPDYIRMNHEAYGNSMFFFARREQMYTRHFFTRGGSVGDKEAVPQSLYLTADAEPRTTLATTNYVGTPSGSMVSSDVQLFNRSYWLQRCQGQNNGICWRNQLFITVGDNTRGTSLSISMKNNASTTYSNANFNDFLRHTEEFDLSFIVQLCKVKLTPENLAYIHTMDPNILEDWQLSVSQPPTNPLEDQYRFLGSSLAAKCPEQAPPEPQTDPYSQYKFWEVDLTERMSEQLDQFPLGRKFLYQSGMTQRTATSSTTKRKTVRVSTSAKRRRKA.

The tract at residues 480–508 (GMTQRTATSSTTKRKTVRVSTSAKRRRKA) is disordered. The segment covering 491–508 (TKRKTVRVSTSAKRRRKA) has biased composition (basic residues).

This sequence belongs to the papillomaviridae L1 protein family. As to quaternary structure, self-assembles into homopentamers. The capsid has an icosahedral symmetry and consists of 72 capsomers, with each capsomer being a pentamer of L1. Interacts with the minor capsid protein L2; this interaction is necessary for viral genome encapsidation. Interacts with protein E2; this interaction enhances E2-dependent replication and transcription activation.

Its subcellular location is the virion. The protein localises to the host nucleus. Forms an icosahedral capsid with a T=7 symmetry and a 50 nm diameter. The capsid is composed of 72 pentamers linked to each other by disulfide bonds and associated with L2 proteins. Binds to heparan sulfate proteoglycans on cell surface of basal layer keratinocytes to provide initial virion attachment. This binding mediates a conformational change in the virus capsid that facilitates efficient infection. The virion enters the host cell via endocytosis. During virus trafficking, L1 protein dissociates from the viral DNA and the genomic DNA is released to the host nucleus. The virion assembly takes place within the cell nucleus. Encapsulates the genomic DNA together with protein L2. This is Major capsid protein L1 from Human papillomavirus type 1 (Human papillomavirus type 1a).